The primary structure comprises 116 residues: Large ribosomal subunit protein uL22 (116 aa).

This sequence belongs to the universal ribosomal protein uL22 family. As to quaternary structure, part of the 50S ribosomal subunit.

Its function is as follows. This protein binds specifically to 23S rRNA; its binding is stimulated by other ribosomal proteins, e.g. L4, L17, and L20. It is important during the early stages of 50S assembly. It makes multiple contacts with different domains of the 23S rRNA in the assembled 50S subunit and ribosome. Functionally, the globular domain of the protein is located near the polypeptide exit tunnel on the outside of the subunit, while an extended beta-hairpin is found that lines the wall of the exit tunnel in the center of the 70S ribosome. This chain is Large ribosomal subunit protein uL22, found in Leptospira biflexa serovar Patoc (strain Patoc 1 / Ames).